The chain runs to 471 residues: 3-isopropylmalate dehydratase large subunit (471 aa).

Positions 346, 406, and 409 each coordinate [4Fe-4S] cluster.

This sequence belongs to the aconitase/IPM isomerase family. LeuC type 1 subfamily. As to quaternary structure, heterodimer of LeuC and LeuD. [4Fe-4S] cluster is required as a cofactor.

The catalysed reaction is (2R,3S)-3-isopropylmalate = (2S)-2-isopropylmalate. Its pathway is amino-acid biosynthesis; L-leucine biosynthesis; L-leucine from 3-methyl-2-oxobutanoate: step 2/4. Functionally, catalyzes the isomerization between 2-isopropylmalate and 3-isopropylmalate, via the formation of 2-isopropylmaleate. The chain is 3-isopropylmalate dehydratase large subunit from Bacillus pumilus (strain SAFR-032).